A 368-amino-acid chain; its full sequence is tRNA-specific 2-thiouridylase MnmA (368 aa).

ATP contacts are provided by residues 12–19 and M38; that span reads GMSGGVDS. The interval 98–100 is interaction with target base in tRNA; that stretch reads NPD. C103 acts as the Nucleophile in catalysis. C103 and C200 are joined by a disulfide. G128 is a binding site for ATP. Positions 150–152 are interaction with tRNA; that stretch reads KDQ. C200 (cysteine persulfide intermediate) is an active-site residue. The segment at 313–314 is interaction with tRNA; the sequence is RY.

This sequence belongs to the MnmA/TRMU family. In terms of assembly, interacts with TusE.

It localises to the cytoplasm. The catalysed reaction is S-sulfanyl-L-cysteinyl-[protein] + uridine(34) in tRNA + AH2 + ATP = 2-thiouridine(34) in tRNA + L-cysteinyl-[protein] + A + AMP + diphosphate + H(+). Its function is as follows. Catalyzes the 2-thiolation of uridine at the wobble position (U34) of tRNA(Lys), tRNA(Glu) and tRNA(Gln), leading to the formation of s(2)U34, the first step of tRNA-mnm(5)s(2)U34 synthesis. Sulfur is provided by IscS, via a sulfur-relay system. Binds ATP and its substrate tRNAs. The protein is tRNA-specific 2-thiouridylase MnmA of Pectobacterium atrosepticum (strain SCRI 1043 / ATCC BAA-672) (Erwinia carotovora subsp. atroseptica).